Reading from the N-terminus, the 148-residue chain is MFNKKVLKHNLAEMNPKELIKFIKHEFPINGQDYHTHARKVQIIKSLSPSELSSAIARMEGIKSQYDPSKTWGIGSLILGTSFIGFQVLFGVNISKITEGNRLNALIYVLITIIICLWTLRNIIKDKENATTADYLKELLIQIKSEKN.

2 helical membrane-spanning segments follow: residues 72–92 (WGIG…LFGV) and 104–124 (NALI…RNII).

The protein localises to the cell membrane. This is SPbeta prophage-derived uncharacterized protein YomK (yomK) from Bacillus subtilis (strain 168).